Consider the following 205-residue polypeptide: Ypt/Rab-type GTPase ypt7 (205 aa).

Residues 17 to 23 (SGVGKTS), 33 to 40 (FSASYKAT), glycine 66, 125 to 128 (NKID), and 157 to 159 (SAK) each bind GTP. Residues 37-45 (YKATIGADF) carry the Effector region motif. S-geranylgeranyl cysteine attachment occurs at residues cysteine 203 and cysteine 205. The residue at position 205 (cysteine 205) is a Cysteine methyl ester.

It belongs to the small GTPase superfamily. Rab family. Interacts with the Rab GDP dissociation inhibitor GDI1.

The protein localises to the vacuole. Its activity is regulated as follows. Rab activation is generally mediated by a guanine exchange factor (GEF), while inactivation through hydrolysis of bound GTP is catalyzed by a GTPase activating protein (GAP). Ypt/Rab-type GTPases are key regulators of membrane trafficking and intracellular vesicular transport. They act as molecular switches that convert between GTP-bound and GDP-bound states, and regulate virtually all steps of membrane traffic from the formation of the transport vesicle at the donor membrane to its fusion at the target membrane. In the GDP-bound state, Ypt proteins are predominantly cytosolic, solubilized through the interaction with a GDP dissociation inhibitor (GDI). In the GTP-bound state, the proteins are membrane bound and interact with specific effector proteins that select cargo, promote vesicle movement, or verify the correct site of fusion. Required for fungal morphogenesis, vacuole fusion, autophagy, stress resistance and pathogenicity. The polypeptide is Ypt/Rab-type GTPase ypt7 (Pyricularia oryzae (strain 70-15 / ATCC MYA-4617 / FGSC 8958) (Rice blast fungus)).